Reading from the N-terminus, the 181-residue chain is ATP-dependent protease subunit HslV (181 aa).

The active site involves threonine 11. Residues alanine 166, cysteine 169, and threonine 172 each coordinate Na(+).

It belongs to the peptidase T1B family. HslV subfamily. In terms of assembly, a double ring-shaped homohexamer of HslV is capped on each side by a ring-shaped HslU homohexamer. The assembly of the HslU/HslV complex is dependent on binding of ATP.

It is found in the cytoplasm. The enzyme catalyses ATP-dependent cleavage of peptide bonds with broad specificity.. With respect to regulation, allosterically activated by HslU binding. Protease subunit of a proteasome-like degradation complex believed to be a general protein degrading machinery. This Chlorobaculum parvum (strain DSM 263 / NCIMB 8327) (Chlorobium vibrioforme subsp. thiosulfatophilum) protein is ATP-dependent protease subunit HslV.